The primary structure comprises 299 residues: F-actin-capping protein subunit alpha-3 (299 aa).

Ser290 bears the Phosphoserine mark.

Belongs to the F-actin-capping protein alpha subunit family. Component of the F-actin capping complex, composed of a heterodimer of an alpha and a beta subunit. Component of the WASH complex, composed of F-actin-capping protein subunit alpha (CAPZA1, CAPZA2 or CAPZA3), F-actin-capping protein subunit beta (CAPZB), WASH (WASHC1, WASH2P, WASH3P, WASH4P, WASH5P or WASH6P), WASHC2 (WASHC2A or WASHC2C), WASHC3, WASHC4 and WASHC5. In terms of tissue distribution, expressed exclusively in testis and sperm. Highest expression is found in the neck region of ejaculated sperm with lower levels found in the tail and postacrosome region.

It localises to the cytoplasm. It is found in the cytoskeleton. Its function is as follows. F-actin-capping proteins bind in a Ca(2+)-independent manner to the fast growing ends of actin filaments (barbed end) thereby blocking the exchange of subunits at these ends. Unlike other capping proteins (such as gelsolin and severin), these proteins do not sever actin filaments. May play a role in the morphogenesis of spermatid. The protein is F-actin-capping protein subunit alpha-3 (CAPZA3) of Homo sapiens (Human).